The following is a 660-amino-acid chain: Kinesin-like protein KIF22 (660 aa).

The tract at residues 1-31 (MSLRAKTCPQRREMASATSGPGRCVSKGGLG) is disordered. Residues 38–363 (RVRVAVRLRP…LNFTARSKEV (326 aa)) form the Kinesin motor domain. 122-129 (GPTGAGKT) is an ATP binding site. The interval 391-418 (PSEAKKAKGPEEESTGSPESTAAPASAS) is disordered. Residues 405 to 418 (TGSPESTAAPASAS) are compositionally biased toward low complexity. A phosphoserine mark is found at S407, S422, and S447. A Glycyl lysine isopeptide (Lys-Gly) (interchain with G-Cter in SUMO2) cross-link involves residue K460. The stretch at 460–505 (KRERMVLMKTVEEKNLEIERLKMKQKELEAKVLAQEAPDPREKENT) forms a coiled coil. Disordered regions lie at residues 493–516 (AQEAPDPREKENTPTILQPPASYS) and 534–567 (IQKQRESSNQIQLLKKGPKRKLEPSPESEAVEKD). Positions 505–516 (TPTILQPPASYS) are enriched in polar residues. Phosphoserine occurs at positions 540 and 576.

It belongs to the TRAFAC class myosin-kinesin ATPase superfamily. Kinesin family. Interacts with FAM83D and SIAH1. Post-translationally, ubiquitinated; mediated by SIAH1 and leading to its subsequent proteasomal degradation.

The protein resides in the nucleus. It localises to the cytoplasm. The protein localises to the cytoskeleton. Its function is as follows. Kinesin family member that is involved in spindle formation and the movements of chromosomes during mitosis and meiosis. Binds to microtubules and to DNA. Plays a role in congression of laterally attached chromosomes in NDC80-depleted cells. The sequence is that of Kinesin-like protein KIF22 (Kif22) from Mus musculus (Mouse).